A 1711-amino-acid polypeptide reads, in one-letter code: MRPLILLAALLWLQGFLAEDDACSSLEGSPDRQGGGPLLSVNVSSHGKSTSLFLSWVAAELGGFDYALSLRSVNSSGSPEGQQLQAHTNESGFEFHGLVPGSRYQLKLTVLRPCWQNVTITLTARTAPTVVRGLQLHSAGSPARLEASWSDAPGDQDSYQLLLYHLESQTLACNVSVSPDTLSYSFGDLLPGTQYVLEVITWAGSLHAKTSILQWTEPVPPDHLALRALGTSSLQAFWNSSEGATSFHLMLTDLLGGTNTTAVIRQGVSTHTFLHLSPGTPHELKICASAGPHQIWGPSATEWTYPSYPSDLVLTPLRNELWASWKAGLGARDGYVLKLSGPMESTSTLGPEECNAVFPGPLPPGHYTLQLKVLAGPYDAWVEGSTWLAESAALPREVPGARLWLDGLEASKQPGRRALLYSDDAPGSLGNISVPSGATHVIFCGLVPGAHYRVDIASSTGDISQSISGYTSPLPPQSLEVISRSSPSDLTIAWGPAPGQLEGYKVTWHQDGSQRSPGDLVDLGPDTLSLTLKSLVPGSCYTVSAWAWAGNLDSDSQKIHSCTRPAPPTNLSLGFAHQPAALKASWYHPPGGRDAFHLRLYRLRPLTLESEKVLPREAQNFSWAQLTAGCEFQVQLSTLWGSERSSSANATGWTPPSAPTLVNVTSDAPTQLQVSWAHVPGGRSRYQVTLYQESTRTATSIMGPKEDGTSFLGLTPGTKYKVEVISWAGPLYTAAANVSAWTYPLIPNELLVSMQAGSAVVNLAWPSGPLGQGACHAQLSDAGHLSWEQPLKLGQELFMLRDLTPGHTISMSVRCRAGPLQASTHLVVLSVEPGPVEDVLCHPEATYLALNWTMPAGDVDVCLVVVERLVPGGGTHFVFQVNTSGDALLLPNLMPTTSYRLSLTVLGRNSRWSRAVSLVCSTSAEAWHPPELAEPPQVELGTGMGVTVMRGMFGKDDGQIQWYGIIATINMTLAQPSREAINYTWYDHYYRGCESFLALLFPNPFYPEPWAGPRSWTVPVGTEDCDNTQEICNGRLKSGFQYRFSVVAFSRLNTPETILAFSAFSEPRASISLAIIPLTVMLGAVVGSIVIVCAVLCLLRWRCLKGPRSEKDGFSKELMPYNLWRTHRPIPIHSFRQSYEAKSAHAHQTFFQEFEELKEVGKDQPRLEAEHPDNIIKNRYPHVLPYDHSRVRLTQLPGEPHSDYINANFIPGYSHTQEIIATQGPLKKTLEDFWRLVWEQQVHVIIMLTVGMENGRVLCEHYWPANSTPVTHGHITIHLLAEEPEDEWTRREFQLQHGTEQKQRRVKQLQFTTWPDHSVPEAPSSLLAFVELVQEQVQATQGKGPILVHCSAGVGRTGTFVALLRLLRQLEEEKVADVFNTVYILRLHRPLMIQTLSQYIFLHSCLLNKILEGPPDSSDSGPISVMDFAQACAKRAANANAGFLKEYKLLKQAIKDGTGSLLPPPDYNQNSIVSRRHSQEQFALVEECPEDSMLEASLFPGGPSGCDHVVLTGSAGPKELWEMVWEHDAHVLVSLGLPDTKEKPPDIWPVEMQPIVTDMVTVHRVSESNTTTGWPSTLFRVIHGESGKERQVQCLQFPCSESGCELPANTLLTFLDAVGQCCFRGKSKKPGTLLSHSSKNTNQLGTFLAMEQLLQQAGTERTVDVFNVALKQSQACGLMTPTLEQYIYLYNCLNSALLNGLPRAGKWPAPC.

The first 17 residues, 1-17 (MRPLILLAALLWLQGFL), serve as a signal peptide directing secretion. Residues 18-1074 (AEDDACSSLE…SEPRASISLA (1057 aa)) lie on the Extracellular side of the membrane. Fibronectin type-III domains are found at residues 37–129 (PLLS…TAPT), 130–222 (VVRG…VPPD), 218–305 (PVPP…EWTY), 306–391 (PSYP…LAES), 393–470 (ALPR…ISGY), 475–569 (PPQS…APPT), 565–654 (PAPP…TGWT), 655–749 (PPSA…IPNE), 744–831 (PLIP…VLSV), and 832–926 (EPGP…SAEA). Residues asparagine 42, asparagine 74, asparagine 89, asparagine 117, asparagine 174, asparagine 239, and asparagine 259 are each glycosylated (N-linked (GlcNAc...) asparagine). N-linked (GlcNAc...) asparagine glycosylation is present at asparagine 431. N-linked (GlcNAc...) asparagine glycans are attached at residues asparagine 570, asparagine 620, asparagine 649, asparagine 663, and asparagine 737. 4 N-linked (GlcNAc...) asparagine glycosylation sites follow: asparagine 851, asparagine 882, asparagine 970, and asparagine 982. A helical transmembrane segment spans residues 1075–1095 (IIPLTVMLGAVVGSIVIVCAV). Residues 1096–1711 (LCLLRWRCLK…PRAGKWPAPC (616 aa)) are Cytoplasmic-facing. Tyrosine-protein phosphatase domains are found at residues 1150-1409 (FFQE…LLNK) and 1427-1696 (DFAQ…LNSA). Substrate contacts are provided by residues aspartate 1316, 1350–1356 (CSAGVGR), and glutamine 1394. The active-site Phosphocysteine intermediate is cysteine 1350.

The protein belongs to the protein-tyrosine phosphatase family. Receptor class 3 subfamily. Post-translationally, the cytoplasmic domain contains potential phosphorylation sites. In terms of tissue distribution, bone and testis. In the latter, restricted to the basal portion of the seminiferous tubule.

It localises to the membrane. The catalysed reaction is O-phospho-L-tyrosyl-[protein] + H2O = L-tyrosyl-[protein] + phosphate. Functionally, protein tyrosine phosphatase that acts as a regulator of energy metabolism. Prevents decarboxylation of osteocalcin (Bglap) via an indirect mechanism, preventing the hormone activity of osteocalcin. Functions in signaling pathways during bone remodeling, as well as serve a broader role in cell interactions associated with differentiation in bone and testis. Associated with differentiation in bone and testis. This chain is Receptor-type tyrosine-protein phosphatase V (Ptprv), found in Rattus norvegicus (Rat).